The primary structure comprises 161 residues: Putative pre-16S rRNA nuclease (161 aa).

Belongs to the YqgF nuclease family.

Its subcellular location is the cytoplasm. Functionally, could be a nuclease involved in processing of the 5'-end of pre-16S rRNA. This chain is Putative pre-16S rRNA nuclease, found in Bartonella bacilliformis (strain ATCC 35685 / KC583 / Herrer 020/F12,63).